Here is a 649-residue protein sequence, read N- to C-terminus: Mediator of RNA polymerase II transcription subunit 17 (649 aa).

Residues 51–79 (QGSGSEEEEAAGPDGDAPDWGGAGADQDD) form a disordered region.

The protein belongs to the Mediator complex subunit 17 family. Component of the Mediator complex, which is composed of MED1, MED4, MED6, MED7, MED8, MED9, MED10, MED11, MED12, MED13, MED13L, MED14, MED15, MED16, MED17, MED18, MED19, MED20, MED21, MED22, MED23, MED24, MED25, MED26, MED27, MED29, MED30, MED31, CCNC, CDK8 and CDC2L6/CDK11. The MED12, MED13, CCNC and CDK8 subunits form a distinct module termed the CDK8 module. Mediator containing the CDK8 module is less active than Mediator lacking this module in supporting transcriptional activation. Individual preparations of the Mediator complex lacking one or more distinct subunits have been variously termed ARC, CRSP, DRIP, PC2, SMCC and TRAP. Interacts with STAT2. Interacts with GATA1 and PPARG.

It is found in the nucleus. In terms of biological role, component of the Mediator complex, a coactivator involved in the regulated transcription of nearly all RNA polymerase II-dependent genes. Mediator functions as a bridge to convey information from gene-specific regulatory proteins to the basal RNA polymerase II transcription machinery. Mediator is recruited to promoters by direct interactions with regulatory proteins and serves as a scaffold for the assembly of a functional preinitiation complex with RNA polymerase II and the general transcription factors. This is Mediator of RNA polymerase II transcription subunit 17 (Med17) from Mus musculus (Mouse).